We begin with the raw amino-acid sequence, 352 residues long: DNA polymerase IV (352 aa).

A UmuC domain is found at 4–185 (IIHVDMDCFF…LPLSKIPGVG (182 aa)). Asp-8 and Asp-103 together coordinate Mg(2+). Glu-104 is a catalytic residue.

The protein belongs to the DNA polymerase type-Y family. In terms of assembly, monomer. It depends on Mg(2+) as a cofactor.

It is found in the cytoplasm. The catalysed reaction is DNA(n) + a 2'-deoxyribonucleoside 5'-triphosphate = DNA(n+1) + diphosphate. Functionally, poorly processive, error-prone DNA polymerase involved in untargeted mutagenesis. Copies undamaged DNA at stalled replication forks, which arise in vivo from mismatched or misaligned primer ends. These misaligned primers can be extended by PolIV. Exhibits no 3'-5' exonuclease (proofreading) activity. May be involved in translesional synthesis, in conjunction with the beta clamp from PolIII. This is DNA polymerase IV from Enterobacter sp. (strain 638).